We begin with the raw amino-acid sequence, 102 residues long: MKKVLALVVAAAMGLSSAAFAAETATTPAPTATTTKAAPAKTTHHKKQHKAAPAQKAQAAKKHHKNAKAEQKAPEQKAQAAKKHAKKHSHQQPAKPAAQPAA.

An N-terminal signal peptide occupies residues 1-21; the sequence is MKKVLALVVAAAMGLSSAAFA. Residues 22–41 are compositionally biased toward low complexity; it reads AETATTPAPTATTTKAAPAK. Residues 22-58 constitute a propeptide that is removed on maturation; that stretch reads AETATTPAPTATTTKAAPAKTTHHKKQHKAAPAQKAQ. Residues 22–102 are disordered; the sequence is AETATTPAPT…PAKPAAQPAA (81 aa). The segment covering 80 to 90 has biased composition (basic residues); that stretch reads AAKKHAKKHSH. Positions 91 to 102 are enriched in low complexity; it reads QQPAKPAAQPAA.

Belongs to the Asr family. Post-translationally, proteolytic processing gives rise to the active protein.

The protein resides in the periplasm. Its function is as follows. Required for growth and/or survival at acidic conditions. This chain is Acid shock protein, found in Escherichia coli O45:K1 (strain S88 / ExPEC).